Reading from the N-terminus, the 101-residue chain is uncharacterized protein (101 aa).

The next 2 helical transmembrane spans lie at 10–30 (VLAI…IGSI) and 67–87 (IILG…ILSI).

The protein resides in the membrane. This is an uncharacterized protein from Acanthamoeba polyphaga (Amoeba).